The chain runs to 402 residues: MAARNCTKALRPLARQLATPAVQRRTFVAAASAVRASVAVKAVAAPARQQVRGVKTMDFAGHKEEVHERADWPAEKLLDYFKNDTLALIGYGSQGHGQGLNLRDNGLNVIVGVRKNGKSWEDAIQDGWVPGKNLFDVDEAISRGTIVMNLLSDAAQSETWPHIKPQITKGKTLYFSHGFSPVFKDLTKVEVPTDVDVILVAPKGSGRTVRSLFREGRGINSSFAVYQDVTGKAKEKAVALGVAVGSGYLYETTFEKEVYSDLYGERGCLMGGIHGMFLAQYEVLRERGHSPSEAFNETVEEATQSLYPLIGAHGMDWMFDACSTTARRGAIDWTPKFKDALKPVFNNLYDSVKNGDETKRSLEYNSQPDYRERYEAELDEIRNLEIWRAGKAVRSLRPENQK.

The N-terminal 26 residues, 1 to 26 (MAARNCTKALRPLARQLATPAVQRRT), are a transit peptide targeting the mitochondrion. In terms of domain architecture, KARI N-terminal Rossmann spans 63–252 (KEEVHERADW…AVGSGYLYET (190 aa)). NADP(+)-binding positions include 90 to 99 (GYGSQGHGQG), 114 to 119 (RKNGKS), and 152 to 156 (SDAAQ). Residue His177 is part of the active site. Positions 253-400 (TFEKEVYSDL…KAVRSLRPEN (148 aa)) constitute a KARI C-terminal knotted domain. Positions 261, 265, 297, and 301 each coordinate Mg(2+). Position 323 (Ser323) interacts with substrate.

Belongs to the ketol-acid reductoisomerase family. Mg(2+) serves as cofactor.

The protein resides in the mitochondrion. The enzyme catalyses (2R)-2,3-dihydroxy-3-methylbutanoate + NADP(+) = (2S)-2-acetolactate + NADPH + H(+). It carries out the reaction (2R,3R)-2,3-dihydroxy-3-methylpentanoate + NADP(+) = (S)-2-ethyl-2-hydroxy-3-oxobutanoate + NADPH + H(+). Its pathway is amino-acid biosynthesis; L-isoleucine biosynthesis; L-isoleucine from 2-oxobutanoate: step 2/4. It participates in amino-acid biosynthesis; L-valine biosynthesis; L-valine from pyruvate: step 2/4. The polypeptide is Ketol-acid reductoisomerase, mitochondrial (ilv-2) (Neurospora crassa (strain ATCC 24698 / 74-OR23-1A / CBS 708.71 / DSM 1257 / FGSC 987)).